The chain runs to 309 residues: Ribonuclease H2 subunit B (309 aa).

N-acetylalanine is present on A2. K295 is modified (N6-acetyllysine). S296 is modified (phosphoserine).

This sequence belongs to the RNase H2 subunit B family. As to quaternary structure, the RNase H2 complex is a heterotrimer composed of the catalytic subunit RNASEH2A and the non-catalytic subunits RNASEH2B and RNASEH2C.

The protein localises to the nucleus. Functionally, non catalytic subunit of RNase H2, an endonuclease that specifically degrades the RNA of RNA:DNA hybrids. Participates in DNA replication, possibly by mediating the removal of lagging-strand Okazaki fragment RNA primers during DNA replication. Mediates the excision of single ribonucleotides from DNA:RNA duplexes. The sequence is that of Ribonuclease H2 subunit B (RNASEH2B) from Bos taurus (Bovine).